A 325-amino-acid polypeptide reads, in one-letter code: tRNA dimethylallyltransferase (325 aa).

Residue 25–32 participates in ATP binding; sequence GNTGSGKS. 27–32 is a substrate binding site; it reads TGSGKS. The interaction with substrate tRNA stretch occupies residues 50–53; sequence DSRQ.

The protein belongs to the IPP transferase family. Monomer. It depends on Mg(2+) as a cofactor.

It carries out the reaction adenosine(37) in tRNA + dimethylallyl diphosphate = N(6)-dimethylallyladenosine(37) in tRNA + diphosphate. Functionally, catalyzes the transfer of a dimethylallyl group onto the adenine at position 37 in tRNAs that read codons beginning with uridine, leading to the formation of N6-(dimethylallyl)adenosine (i(6)A). The protein is tRNA dimethylallyltransferase of Dehalococcoides mccartyi (strain ATCC BAA-2266 / KCTC 15142 / 195) (Dehalococcoides ethenogenes (strain 195)).